We begin with the raw amino-acid sequence, 366 residues long: 15-cis-zeta-carotene isomerase, chloroplastic (366 aa).

Residues 1–45 (MASQLRLHLAATPPLLPHRRPHLARPLCPTLNPIRAPLPPLSRVL) constitute a chloroplast transit peptide. The next 6 membrane-spanning stretches (helical) occupy residues 94–114 (SWAY…VLWI), 136–156 (EVVM…MASL), 171–191 (VLFA…FINH), 203–223 (GITG…FFLY), 260–280 (VIWC…AASV), and 338–358 (LPYV…PLMQ).

In terms of tissue distribution, expressed in leaves and roots, and at lower levels in embryos and endosperm.

Its subcellular location is the plastid. It localises to the chloroplast membrane. It carries out the reaction 9,9',15-tri-cis-zeta-carotene = 9,9'-di-cis-zeta-carotene. Its function is as follows. Isomerase involved in the biosynthesis of carotenoids. Catalyzes the cis- to trans-conversion of the 15-cis-bond in 9,15,9'-tri-cis-zeta-carotene. The chain is 15-cis-zeta-carotene isomerase, chloroplastic from Zea mays (Maize).